Consider the following 167-residue polypeptide: MAGLWKTFVLVVALAVVSCEALRQLRYEEIVDRAIEAYNQGRQGRPLFRLLSATPPSSQNPATNIPLQFRIKETECTSTQERQPKDCDFLEDGEERNCTGKFFRRRQSTSLTLTCDRDCSREDTQETSFNDKQDVSEKEKFEDVPPHIRNIYEDAKYDIIGNILKNF.

Residues 1-21 (MAGLWKTFVLVVALAVVSCEA) form the signal peptide. Residues 122-141 (EDTQETSFNDKQDVSEKEKF) are disordered.

The protein belongs to the cathelicidin family. Monomer. Homodimer; disulfide-linked. As to expression, expressed in myeloid bone marrow cells. Expressed in neutrophilic precursors (at protein level). Expressed in myeloid bone marrow cells.

It localises to the secreted. Its subcellular location is the cytoplasmic granule. Its function is as follows. Acts as an inhibitor of cathepsin B (CTSB) activity. Plays a role as a negative regulator of tumor vascular development, cell invasion and metastasis. This chain is Neutrophilic granule protein, found in Mus musculus (Mouse).